The chain runs to 107 residues: Metallothionein-1 (107 aa).

Positions 1 to 2 (MD) are excised as a propeptide.

This sequence belongs to the metallothionein superfamily. Type 7 family.

Its function is as follows. The metallothioneins are involved in the cellular sequestration of toxic metal ions. Binds 12 cadmium ions per molecule. The chain is Metallothionein-1 from Tetrahymena pyriformis.